The following is a 376-amino-acid chain: MKLTIAGDSHGKYMVAILEGLPSGIRVDEELIRRDLFRRRNCYGRGKRMKMEEDAFEIVSGLWKGITTGAPVTILIPNRAGNPVKDVRSVPRPGHIDYAAWVKYKLPDLNIYVERSSARWTVALTAAGSLLKSLLKEFGIEVLGFVTRLGNVEARDIPGDFEELKRRRDESVVFCPDPEATKEMVAEIDRAKEEGNTLGGKVKVIARGVPAGIGSYSDLFKKLDSKIGSLFFAIPAVKGVVIGSEEMWYGFDYLDEFELEDGKIKRKTNNLGGIEGGITNGEDVWVNVSVKPIPTTGKPLKSVDLRTMEPAKTPYVRSDVTAVPPASVVCEAALAVVISDALLEHLGDGNIDDLKRRFENENLPRWNDGFWKEHYR.

R39 and R45 together coordinate NADP(+). FMN is bound by residues 115–117 (RSS), G276, 291–295 (KPIPT), and R317.

Belongs to the chorismate synthase family. As to quaternary structure, homotetramer. FMNH2 serves as cofactor.

It catalyses the reaction 5-O-(1-carboxyvinyl)-3-phosphoshikimate = chorismate + phosphate. It participates in metabolic intermediate biosynthesis; chorismate biosynthesis; chorismate from D-erythrose 4-phosphate and phosphoenolpyruvate: step 7/7. In terms of biological role, catalyzes the anti-1,4-elimination of the C-3 phosphate and the C-6 proR hydrogen from 5-enolpyruvylshikimate-3-phosphate (EPSP) to yield chorismate, which is the branch point compound that serves as the starting substrate for the three terminal pathways of aromatic amino acid biosynthesis. This reaction introduces a second double bond into the aromatic ring system. This Thermotoga maritima (strain ATCC 43589 / DSM 3109 / JCM 10099 / NBRC 100826 / MSB8) protein is Chorismate synthase.